The chain runs to 277 residues: Glucose-6-phosphatase catalytic subunit 1 (277 aa).

A substrate-binding site is contributed by Arg4. Helical transmembrane passes span Gly39–Ala59 and Leu67–Val87. His40 (proton donor) is an active-site residue. Arg91 serves as a coordination point for substrate. His97 functions as the Nucleophile in the catalytic mechanism. 3 consecutive transmembrane segments (helical) span residues Phe131 to Leu151, Ile215 to Pro235, and Ala250 to Val270. Positions Gly274 to Leu277 match the Prevents secretion from ER motif.

This sequence belongs to the glucose-6-phosphatase family.

The protein localises to the endoplasmic reticulum membrane. It carries out the reaction D-glucose 6-phosphate + H2O = D-glucose + phosphate. It functions in the pathway carbohydrate biosynthesis; gluconeogenesis. Hydrolyzes glucose-6-phosphate to glucose in the endoplasmic reticulum. Forms with the glucose-6-phosphate transporter (SLC37A4/G6PT) the complex responsible for glucose production in the terminal step of glycogenolysis and gluconeogenesis. Hence, it is the key enzyme in homeostatic regulation of blood glucose levels. The sequence is that of Glucose-6-phosphatase catalytic subunit 1 (g6pc1) from Haplochromis xenognathus (Lake Victoria cichlid).